Here is a 307-residue protein sequence, read N- to C-terminus: D-alanine--D-alanine ligase (307 aa).

Positions 101–301 constitute an ATP-grasp domain; the sequence is KTVMRAAGVS…FGELVRWMVE (201 aa). 127–182 contributes to the ATP binding site; the sequence is PLTPPYVVKPIAEGSSMGVIIVRDERSHPPQILASDEWVYGEEVLAETYVAGRELT. Mg(2+)-binding residues include D251, E268, and N270.

It belongs to the D-alanine--D-alanine ligase family. It depends on Mg(2+) as a cofactor. Mn(2+) is required as a cofactor.

Its subcellular location is the cytoplasm. The enzyme catalyses 2 D-alanine + ATP = D-alanyl-D-alanine + ADP + phosphate + H(+). The protein operates within cell wall biogenesis; peptidoglycan biosynthesis. Functionally, cell wall formation. This chain is D-alanine--D-alanine ligase, found in Methylorubrum extorquens (strain PA1) (Methylobacterium extorquens).